A 319-amino-acid chain; its full sequence is L-lactate dehydrogenase (319 aa).

NAD(+) contacts are provided by residues valine 17, aspartate 38, lysine 43, tyrosine 69, and 83-84; that span reads GA. Substrate is bound by residues glutamine 86, arginine 92, and 124 to 127; that span reads NPVD. NAD(+)-binding positions include 122–124 and serine 147; that span reads ATN. 152 to 155 contributes to the substrate binding site; sequence DTAR. Residues arginine 157 and histidine 172 each contribute to the beta-D-fructose 1,6-bisphosphate site. The active-site Proton acceptor is the histidine 179. Tyrosine 224 is subject to Phosphotyrosine. Residue threonine 233 participates in substrate binding.

This sequence belongs to the LDH/MDH superfamily. LDH family. Homotetramer.

Its subcellular location is the cytoplasm. The catalysed reaction is (S)-lactate + NAD(+) = pyruvate + NADH + H(+). It functions in the pathway fermentation; pyruvate fermentation to lactate; (S)-lactate from pyruvate: step 1/1. Its activity is regulated as follows. Allosterically activated by fructose 1,6-bisphosphate (FBP). Functionally, catalyzes the conversion of lactate to pyruvate. In Bacillus licheniformis (strain ATCC 14580 / DSM 13 / JCM 2505 / CCUG 7422 / NBRC 12200 / NCIMB 9375 / NCTC 10341 / NRRL NRS-1264 / Gibson 46), this protein is L-lactate dehydrogenase.